Reading from the N-terminus, the 164-residue chain is Putative Cys-tRNA(Pro)/Cys-tRNA(Cys) deacylase EbsC (164 aa).

The protein belongs to the prolyl-tRNA editing family. YbaK/EbsC subfamily.

Functionally, affects the expression of the receptor, named binding substance, that mediates mating aggregate formation. Could be a regulatory protein that suppresses the function or expression of ebsA and/or ebsMB. The chain is Putative Cys-tRNA(Pro)/Cys-tRNA(Cys) deacylase EbsC from Enterococcus faecalis (strain ATCC 700802 / V583).